Reading from the N-terminus, the 300-residue chain is MKQITIASRESKLALWQTNFIKNRIQSELNIPCEISTMKTQGDIILDQPLNKIGGKALFMKELEVAMLSNKADIAVHSLKDVPYQLPQGFCLAGFMPREDPRDAFVSNKYNSIDDLPKGAVVGTSSLRRKAQLLHYRDDLEIRDLRGNIQTRLSKLDNGDYDAIILASAGLIRLELVERITQFIPVEISLPAVGQGIVVIEALERDNDLLEKIQKLNCRESSRVATAERAFNQELKGGCHVAIGAYAELDNNQITLMAMVASSDGKKILKRKMIGDDPTKLGKLLAQEMIALGAYKILES.

C239 carries the post-translational modification S-(dipyrrolylmethanemethyl)cysteine.

It belongs to the HMBS family. As to quaternary structure, monomer. The cofactor is dipyrromethane.

It catalyses the reaction 4 porphobilinogen + H2O = hydroxymethylbilane + 4 NH4(+). It participates in porphyrin-containing compound metabolism; protoporphyrin-IX biosynthesis; coproporphyrinogen-III from 5-aminolevulinate: step 2/4. Tetrapolymerization of the monopyrrole PBG into the hydroxymethylbilane pre-uroporphyrinogen in several discrete steps. The protein is Porphobilinogen deaminase of Francisella tularensis subsp. tularensis (strain WY96-3418).